Here is a 549-residue protein sequence, read N- to C-terminus: Peptide transport periplasmic protein SapA (549 aa).

A signal peptide spans 1–21; it reads MRLVLSSLIVIAGLLSSQATA.

Belongs to the bacterial solute-binding protein 5 family.

The protein resides in the periplasm. Its function is as follows. Involved in a peptide intake transport system that plays a role in the resistance to antimicrobial peptides. The polypeptide is Peptide transport periplasmic protein SapA (Salmonella typhimurium (strain LT2 / SGSC1412 / ATCC 700720)).